We begin with the raw amino-acid sequence, 417 residues long: Dibenzothiophene monooxygenase (417 aa).

Residues Tyr96, 129–134 (NASSEN), 159–163 (KHFCS), Arg282, 369–370 (AR), and His391 each bind FMN. Residues 131 to 142 (SSENNSHVLDWK) are lid loop.

The protein belongs to the DszC flavin monooxygenase family. In terms of assembly, homotetramer. Homodimer. The cofactor is FAD. It depends on NADH as a cofactor.

It is found in the cytoplasm. It catalyses the reaction dibenzothiophene + 2 FMNH2 + 2 O2 = dibenzothiophene 5,5-dioxide + 2 FMN + 2 H2O + 2 H(+). The catalysed reaction is dibenzothiophene + FMNH2 + O2 = dibenzothiophene 5-oxide + FMN + H2O + H(+). The enzyme catalyses dibenzothiophene 5-oxide + FMNH2 + O2 = dibenzothiophene 5,5-dioxide + FMN + H2O + H(+). Its pathway is sulfur metabolism; dibenzothiophene degradation. Functionally, catalyzes the first step of the '4S' desulfurization pathway that removes covalently bound sulfur from dibenzothiophene (DBT) without breaking carbon-carbon bonds. Sulfur dioxygenase which converts DBT to DBT-sulfone (DBTO2 or DBT 5,5-dioxide) in a stepwise manner. In DBTO (dibenzothiophene-5-oxide) was reported not to be a substrate, in it is reported to be a substrate. Can also use benzyl sulfide and benzyl sulfoxide as substrates, although benzyl sulfoxide is a poor substrate. The pathway substrate specificity has been augmented using mutagenesis, however no mutations allowed use of alkylated thiophenes. This Rhodococcus qingshengii protein is Dibenzothiophene monooxygenase.